The primary structure comprises 379 residues: Homoserine O-acetyltransferase (379 aa).

The AB hydrolase-1 domain maps to 52–356 (NVVMVLHALT…IRGHDGFLVE (305 aa)). Residue serine 157 is the Nucleophile of the active site. Arginine 227 serves as a coordination point for substrate. Active-site residues include aspartate 320 and histidine 350. A substrate-binding site is contributed by aspartate 351.

This sequence belongs to the AB hydrolase superfamily. MetX family. As to quaternary structure, homodimer.

The protein resides in the cytoplasm. The catalysed reaction is L-homoserine + acetyl-CoA = O-acetyl-L-homoserine + CoA. It participates in amino-acid biosynthesis; L-methionine biosynthesis via de novo pathway; O-acetyl-L-homoserine from L-homoserine: step 1/1. In terms of biological role, transfers an acetyl group from acetyl-CoA to L-homoserine, forming acetyl-L-homoserine. This chain is Homoserine O-acetyltransferase, found in Mycobacterium ulcerans (strain Agy99).